The following is a 614-amino-acid chain: Putative binding protein BMEII0691 (614 aa).

Residues 1-28 (MNRFIAFFRSVFLIGLVATAFGALPARA) form the signal peptide.

It belongs to the bacterial solute-binding protein 5 family.

It localises to the periplasm. This Brucella melitensis biotype 1 (strain ATCC 23456 / CCUG 17765 / NCTC 10094 / 16M) protein is Putative binding protein BMEII0691.